The sequence spans 332 residues: MNSTHHHGMYTSLHLWNRSSHGLHGNASESLGKGHSDGGCYEQLFVSPEVFVTLGVISLLENILVIVAIAKNKNLHSPMYFFICSLAVADMLVSVSNGSETIVITLLNSTDTDAQSFTVNIDNVIDSVICSSLLASICSLLSIAVDRYFTIFYALQYHNIMTVRRVGIIISCIWAACTVSGVLFIIYSDSSAVIICLITMFFTMLVLMASLYVHMFLMARLHIKRIAVLPGTGTIRQGANMKGAITLTILIGVFVVCWAPFFLHLLFYISCPQNPYCVCFMSHFNLYLILIMCNAVIDPLIYALRSQELRKTFKEIICFYPLGGICELPGRY.

The Extracellular portion of the chain corresponds to 1–43 (MNSTHHHGMYTSLHLWNRSSHGLHGNASESLGKGHSDGGCYEQ). Asparagine 2, asparagine 17, and asparagine 26 each carry an N-linked (GlcNAc...) asparagine glycan. 2 cysteine pairs are disulfide-bonded: cysteine 40–cysteine 279 and cysteine 271–cysteine 277. A helical transmembrane segment spans residues 44–69 (LFVSPEVFVTLGVISLLENILVIVAI). At 70–81 (AKNKNLHSPMYF) the chain is on the cytoplasmic side. The helical transmembrane segment at 82–106 (FICSLAVADMLVSVSNGSETIVITL) threads the bilayer. Positions 100, 122, and 126 each coordinate Ca(2+). The Extracellular segment spans residues 107–123 (LNSTDTDAQSFTVNIDN). Residues 124 to 145 (VIDSVICSSLLASICSLLSIAV) form a helical membrane-spanning segment. Over 146–165 (DRYFTIFYALQYHNIMTVRR) the chain is Cytoplasmic. Residues 166-186 (VGIIISCIWAACTVSGVLFII) form a helical membrane-spanning segment. Residues 187 to 191 (YSDSS) lie on the Extracellular side of the membrane. A helical membrane pass occupies residues 192-215 (AVIICLITMFFTMLVLMASLYVHM). Over 216 to 248 (FLMARLHIKRIAVLPGTGTIRQGANMKGAITLT) the chain is Cytoplasmic. Residues 249–271 (ILIGVFVVCWAPFFLHLLFYISC) form a helical membrane-spanning segment. At 272–280 (PQNPYCVCF) the chain is on the extracellular side. Residues 281–304 (MSHFNLYLILIMCNAVIDPLIYAL) form a helical membrane-spanning segment. Topologically, residues 305 to 332 (RSQELRKTFKEIICFYPLGGICELPGRY) are cytoplasmic. Cysteine 318 carries S-palmitoyl cysteine lipidation.

It belongs to the G-protein coupled receptor 1 family. As to quaternary structure, homodimer; disulfide-linked, also forms higher order oligomers. Interacts with GNAS. Interacts with ATRNL1. Interacts with MGRN1; this interaction competes with GNAS-binding and thus inhibits agonist-induced cAMP production. Interacts with MRAP and MRAP2; these associated factors increase ligand-sensitivity and generation of cAMP. Brain, enriched in the striatum, nucleus accumbens, and periaqueductal gray.

Its subcellular location is the cell membrane. Functionally, hormone receptor that acts as a key component of the leptin-melanocortin pathway at the intersection of homeostatic maintenance of energetic state. Plays a role in regulating food intake: activation by a stimulating hormone such as anorexigenic alpha-melanocyte stimulating hormone (alpha-MSH) inhibits appetite, whereas binding to a natural antagonist like Agouti-related protein/AGRP promotes appetite. G-protein-coupled receptor that activates conventional Galphas signaling leading to induction of anorexogenic signaling in the hypothalamus to result in negative energy balance. Regulates the firing activity of neurons from the hypothalamus by alpha-MSH and AGRP independently of Galphas signaling by ligand-induced coupling of closure of inwardly rectifying potassium channel KCNJ13. In intestinal epithelial cells, plays a role in the inhibition of hepatic glucose production via nesfatin-1/NUCB2 leading to increased cyclic adenosine monophosphate (cAMP) levels and glucagon-like peptide 1 (GLP-1) secretion in the intestinal epithelium. This chain is Melanocortin receptor 4 (Mc4r), found in Rattus norvegicus (Rat).